Consider the following 326-residue polypeptide: ATP synthase gamma chain (326 aa).

This sequence belongs to the ATPase gamma chain family. In terms of assembly, F-type ATPases have 2 components, CF(1) - the catalytic core - and CF(0) - the membrane proton channel. CF(1) has five subunits: alpha(3), beta(3), gamma(1), delta(1), epsilon(1). CF(0) has three main subunits: a, b and c.

The protein localises to the cell membrane. Functionally, produces ATP from ADP in the presence of a proton gradient across the membrane. The gamma chain is believed to be important in regulating ATPase activity and the flow of protons through the CF(0) complex. The chain is ATP synthase gamma chain from Rhodococcus jostii (strain RHA1).